We begin with the raw amino-acid sequence, 437 residues long: Aspartic proteinase CDR1 (437 aa).

An N-terminal signal peptide occupies residues 1-25; it reads MASLFSSVLLSLCLLSSLFLSNANA. Residues 26-73 constitute a propeptide, activation peptide; that stretch reads KPKLGFTADLIHRDSPKSPFYNPMETSSQRLRNAIHRSVNRVFHFTEK. A Peptidase A1 domain is found at 90-430; sequence YLMNVSIGTP…DTVSKTVSFK (341 aa). N93 is a glycosylation site (N-linked (GlcNAc...) asparagine). Catalysis depends on residues D108 and D319.

This sequence belongs to the peptidase A1 family.

It is found in the secreted. The protein localises to the extracellular space. Its subcellular location is the apoplast. Its function is as follows. Involved in salicylic acid-dependent inducible resistance responses. May release an endogenous peptide elicitor required for the activation of inducible resistance mechanisms. Possesses protease activity in vitro. In Arabidopsis thaliana (Mouse-ear cress), this protein is Aspartic proteinase CDR1 (CDR1).